A 1361-amino-acid chain; its full sequence is DNA-directed RNA polymerase subunit beta'' (1361 aa).

4 residues coordinate Zn(2+): Cys224, Cys295, Cys302, and Cys305.

The protein belongs to the RNA polymerase beta' chain family. RpoC2 subfamily. In terms of assembly, in plastids the minimal PEP RNA polymerase catalytic core is composed of four subunits: alpha, beta, beta', and beta''. When a (nuclear-encoded) sigma factor is associated with the core the holoenzyme is formed, which can initiate transcription. Zn(2+) serves as cofactor.

It localises to the plastid. Its subcellular location is the chloroplast. It carries out the reaction RNA(n) + a ribonucleoside 5'-triphosphate = RNA(n+1) + diphosphate. Its function is as follows. DNA-dependent RNA polymerase catalyzes the transcription of DNA into RNA using the four ribonucleoside triphosphates as substrates. This is DNA-directed RNA polymerase subunit beta'' from Spinacia oleracea (Spinach).